A 655-amino-acid polypeptide reads, in one-letter code: Tumor necrosis factor receptor superfamily member 21 (655 aa).

A signal peptide spans 1–41; the sequence is MGTRASSITALASCSRTAGQVGATMVAGSLLLLGFLSTITA. The Extracellular portion of the chain corresponds to 42–349; that stretch reads QPEQKTLSLP…AHKHFDINEH (308 aa). TNFR-Cys repeat units lie at residues 50 to 88, 90 to 131, 133 to 167, and 170 to 211; these read LPGTYRHVDRTTGQVLTCDKCPAGTYVSEHCTNMSLRVC, SCPA…DREC, CPPGMYQSNGTCAPHTVCPVGWGVRKKGTENEDVR, and QCAR…DNVC. 9 disulfides stabilise this stretch: Cys-67–Cys-80, Cys-70–Cys-88, Cys-91–Cys-106, Cys-109–Cys-123, Cys-113–Cys-131, Cys-133–Cys-144, Cys-150–Cys-168, Cys-171–Cys-186, and Cys-192–Cys-211. N-linked (GlcNAc...) asparagine glycosylation occurs at Asn-82. An N-linked (GlcNAc...) asparagine glycan is attached at Asn-141. Disordered stretches follow at residues 222–305 and 318–339; these read PPSS…QAPH and EATGEKSSTAIKAPKRGHPRQN. 2 stretches are compositionally biased toward polar residues: residues 241 to 262 and 276 to 302; these read VPSSTYEPQGMNSTDSNSTASV and PDNTSSTSGKEGTNRTLPNPPQVTHQQ. Asn-252, Asn-257, Asn-278, and Asn-289 each carry an N-linked (GlcNAc...) asparagine glycan. The segment covering 330 to 339 has biased composition (basic residues); sequence APKRGHPRQN. Residues 350–370 traverse the membrane as a helical segment; that stretch reads LPWMIVLFLLLVLVLIVVCSI. Cys-368 carries S-palmitoyl cysteine lipidation. Over 371 to 655 the chain is Cytoplasmic; that stretch reads RKSSRTLKKG…SVYSHLPDLL (285 aa). The Death domain maps to 415–498; sequence GIDILKLVAA…DVVEKIRGLM (84 aa).

In terms of assembly, associates with TRADD. Interacts with NGFR. Interacts with CASP8. Oxidized in response to reactive oxygen species (ROS), leading to endocytosis. As to expression, detected in spleen B-cells (at protein level). Ubiquitous. Highly expressed in adult spleen, thymus, testis, prostate, ovary, small intestine, colon, brain, lung and kidney, and in fetal brain, liver and lung. Detected at lower levels in adult peripheral blood leukocytes, lung, and in fetal muscle, heart, kidney, small intestine and skin. Detected in T-cells, B-cells and monocytes. In T-cells expression is highest in Th0 cells, intermediate in Th2 cells and lower in Th1 cells. Expressed at low levels in proliferating progenitors in the spinal cord, but is highly expressed by differentiating neurons within the spinal cord and adjacent dorsal root ganglia.

It is found in the cell membrane. In terms of biological role, promotes apoptosis, possibly via a pathway that involves the activation of NF-kappa-B. Can also promote apoptosis mediated by BAX and by the release of cytochrome c from the mitochondria into the cytoplasm. Trophic-factor deprivation triggers the cleavage of surface APP by beta-secretase to release sAPP-beta which is further cleaved to release an N-terminal fragment of APP (N-APP). Negatively regulates oligodendrocyte survival, maturation and myelination. Plays a role in signaling cascades triggered by stimulation of T-cell receptors, in the adaptive immune response and in the regulation of T-cell differentiation and proliferation. Negatively regulates T-cell responses and the release of cytokines such as IL4, IL5, IL10, IL13 and IFNG by Th2 cells. Negatively regulates the production of IgG, IgM and IgM in response to antigens. May inhibit the activation of JNK in response to T-cell stimulation. Also acts as a regulator of pyroptosis: recruits CASP8 in response to reactive oxygen species (ROS) and subsequent oxidation, leading to activation of GSDMC. This Mus musculus (Mouse) protein is Tumor necrosis factor receptor superfamily member 21 (Tnfrsf21).